Consider the following 208-residue polypeptide: Small ribosomal subunit protein uS4 (208 aa).

The 64-residue stretch at 98–161 (QRLDNLVYRM…KNNPQILRAV (64 aa)) folds into the S4 RNA-binding domain.

The protein belongs to the universal ribosomal protein uS4 family. In terms of assembly, part of the 30S ribosomal subunit. Contacts protein S5. The interaction surface between S4 and S5 is involved in control of translational fidelity.

Functionally, one of the primary rRNA binding proteins, it binds directly to 16S rRNA where it nucleates assembly of the body of the 30S subunit. In terms of biological role, with S5 and S12 plays an important role in translational accuracy. This chain is Small ribosomal subunit protein uS4, found in Campylobacter hominis (strain ATCC BAA-381 / DSM 21671 / CCUG 45161 / LMG 19568 / NCTC 13146 / CH001A).